A 510-amino-acid polypeptide reads, in one-letter code: MIWHVQNENFILDSTRIFMKAFHLLLFDGSFIFPECILIFGLILLLMIDSTSDQKDIPWLYFISSTSLVMSITALLFRWREEPMISFSGNFQTNNFNEIFQFLILLCSTLCIPLSVEYIECTEMAITEFLLFVLTATLGGMFLCGANDLITIFVAPECFSLCSYLLSGYTKKDVRSNEATMKYLLMGGASSSILVHGFSWLYGSSGGEIELQEIVNGLINTQMYNSPGISIALIFITVGIGFKLSLAPSHQWTPDVYEGSPTPVVAFLSVTSKVAASASATRIFDIPFYFSSNEWHLLLEILAILSMILGNLIAITQTSMKRMLAYSSIGQIGYVIIGIIVGDSNGGYASMITYMLFYISMNLGTFACIVLFGLRTGTDNIRDYAGLYTKDPFLALSLALCLLSLGGLPPLAGFFGKLHLFWCGWQAGLYFLVSIGLLTSVVSIYYYLKIIKLLMTGRKQEITPHVRNYRGSPLRSNNSIELSMIVCVIASTILGISMNPIIAIAQDTLF.

13 helical membrane-spanning segments follow: residues 24–44 (LLLF…GLIL), 57–77 (IPWL…ALLF), 99–119 (IFQF…VEYI), 124–144 (MAIT…MFLC), 149–169 (LITI…LSGY), 183–203 (YLLM…WLYG), 227–247 (PGIS…LSLA), 295–315 (WHLL…LIAI), 323–343 (MLAY…IVGD), 354–374 (YMLF…LFGL), 395–415 (ALSL…AGFF), 418–438 (LHLF…IGLL), and 484–504 (MIVC…IIAI).

It belongs to the complex I subunit 2 family. NDH is composed of at least 16 different subunits, 5 of which are encoded in the nucleus.

The protein localises to the plastid. It localises to the chloroplast thylakoid membrane. It carries out the reaction a plastoquinone + NADH + (n+1) H(+)(in) = a plastoquinol + NAD(+) + n H(+)(out). It catalyses the reaction a plastoquinone + NADPH + (n+1) H(+)(in) = a plastoquinol + NADP(+) + n H(+)(out). In terms of biological role, NDH shuttles electrons from NAD(P)H:plastoquinone, via FMN and iron-sulfur (Fe-S) centers, to quinones in the photosynthetic chain and possibly in a chloroplast respiratory chain. The immediate electron acceptor for the enzyme in this species is believed to be plastoquinone. Couples the redox reaction to proton translocation, and thus conserves the redox energy in a proton gradient. The polypeptide is NAD(P)H-quinone oxidoreductase subunit 2 B, chloroplastic (Citrus sinensis (Sweet orange)).